The chain runs to 581 residues: MAGRIPRVFINDLLARTDIVDLIDVRVKLKKQGKNYHACCPFHNEKTPSFTVNGEKQFYHCFGCGAHGNAIDFLMNYDKLEFVETVEELAAMHNLEIPYEAGTGLSQIERHQRQNLYQLMNGLNDFYQQSLTHPAAKPARDYLQKRGLSAEIIQRFAIGFAPPGWDNALKRFGNNSDNKALLLDAGMLVNNEQGSTYDRFRNRVMFPIRDKRGRVIGFGGRVLGNDTPKYLNSPETDIFHKGRQLYGLYEAQQYSAEPQRLLVVEGYMDVVALAQYDINYAVASLGTSTTADHMHMLFRATNNVICCYDGDRAGRDAAWRALETAMPYMTDGRQVRFMFLPDGEDPDTLVRKEGKAAFEARMEQAQPLSTFLFNSLLPQVDLSSPDGSTQLAALALPLINQVPGDAHRIQLRQTLGLKLGIFDDSQLDRLVPKQAESGVSRPAPQLKRTTMRILIGLLVQNPDLAPLVPPLDALDQNKLPGLGLFKELVKTCLAQPGLTTGQLLELYRGTNDAATLEKLSMWDDIADKAIAEKTFTDSLNHMFDSLLQLRQEELIARDRTHGLSSEERRELWTLNQELARK.

Residues 40-64 (CPFHNEKTPSFTVNGEKQFYHCFGC) form a CHC2-type zinc finger. One can recognise a Toprim domain in the interval 259-341 (QRLLVVEGYM…GRQVRFMFLP (83 aa)). Mg(2+) contacts are provided by Glu-265, Asp-309, and Asp-311.

This sequence belongs to the DnaG primase family. Monomer. Interacts with DnaB. It depends on Zn(2+) as a cofactor. Mg(2+) is required as a cofactor.

It carries out the reaction ssDNA + n NTP = ssDNA/pppN(pN)n-1 hybrid + (n-1) diphosphate.. RNA polymerase that catalyzes the synthesis of short RNA molecules used as primers for DNA polymerase during DNA replication. This Salmonella typhimurium (strain LT2 / SGSC1412 / ATCC 700720) protein is DNA primase.